A 145-amino-acid polypeptide reads, in one-letter code: Large ribosomal subunit protein uL11 (145 aa).

The protein belongs to the universal ribosomal protein uL11 family. In terms of assembly, part of the ribosomal stalk of the 50S ribosomal subunit. Interacts with L10 and the large rRNA to form the base of the stalk. L10 forms an elongated spine to which L12 dimers bind in a sequential fashion forming a multimeric L10(L12)X complex. Post-translationally, one or more lysine residues are methylated.

In terms of biological role, forms part of the ribosomal stalk which helps the ribosome interact with GTP-bound translation factors. This is Large ribosomal subunit protein uL11 from Flavobacterium johnsoniae (strain ATCC 17061 / DSM 2064 / JCM 8514 / BCRC 14874 / CCUG 350202 / NBRC 14942 / NCIMB 11054 / UW101) (Cytophaga johnsonae).